The primary structure comprises 165 residues: Hemolysin, heat labile (165 aa).

C151 and C161 are oxidised to a cystine.

It belongs to the TDH hemolysin family. Homodimer.

In terms of biological role, bacterial hemolysins are exotoxins that attack blood cell membranes and cause cell rupture by mechanisms not clearly defined. The protein is Hemolysin, heat labile of Grimontia hollisae (Vibrio hollisae).